The following is a 145-amino-acid chain: D-aminoacyl-tRNA deacylase (145 aa).

Residues 137-138 (GP) carry the Gly-cisPro motif, important for rejection of L-amino acids motif.

Belongs to the DTD family. In terms of assembly, homodimer.

The protein localises to the cytoplasm. It catalyses the reaction glycyl-tRNA(Ala) + H2O = tRNA(Ala) + glycine + H(+). The catalysed reaction is a D-aminoacyl-tRNA + H2O = a tRNA + a D-alpha-amino acid + H(+). Its function is as follows. An aminoacyl-tRNA editing enzyme that deacylates mischarged D-aminoacyl-tRNAs. Also deacylates mischarged glycyl-tRNA(Ala), protecting cells against glycine mischarging by AlaRS. Acts via tRNA-based rather than protein-based catalysis; rejects L-amino acids rather than detecting D-amino acids in the active site. By recycling D-aminoacyl-tRNA to D-amino acids and free tRNA molecules, this enzyme counteracts the toxicity associated with the formation of D-aminoacyl-tRNA entities in vivo and helps enforce protein L-homochirality. This chain is D-aminoacyl-tRNA deacylase, found in Salmonella choleraesuis (strain SC-B67).